Consider the following 310-residue polypeptide: CRAL-TRIO domain-containing protein YKL091C (310 aa).

The region spanning 101-274 (ERIKLAKMYP…KYGGTSVLHN (174 aa)) is the CRAL-TRIO domain.

This chain is CRAL-TRIO domain-containing protein YKL091C, found in Saccharomyces cerevisiae (strain ATCC 204508 / S288c) (Baker's yeast).